The primary structure comprises 769 residues: Cap-specific mRNA (nucleoside-2'-O-)-methyltransferase 2 (769 aa).

The 214-residue stretch at 109–322 folds into the Adrift-type SAM-dependent 2'-O-MTase domain; it reads ELCTQAWCKF…VYVVCLYYKG (214 aa). The active site involves lysine 117. Positions 148, 167, and 235 each coordinate S-adenosyl-L-methionine. Aspartate 235 is an active-site residue. Lysine 275 acts as the Proton acceptor in catalysis.

It localises to the nucleus. It is found in the cytoplasm. The enzyme catalyses a 5'-end (N(7)-methyl 5'-triphosphoguanosine)-(2'-O-methyl-ribonucleoside)-(ribonucleotide) in mRNA + S-adenosyl-L-methionine = a 5'-end (N(7)-methyl 5'-triphosphoguanosine)-(2'-O-methyl-ribonucleoside)-(2'-O-methyl-ribonucleotide) in mRNA + S-adenosyl-L-homocysteine + H(+). In terms of biological role, S-adenosyl-L-methionine-dependent methyltransferase that mediates mRNA cap2 2'-O-ribose methylation to the 5'-cap structure of mRNAs. Methylates the ribose of the second nucleotide of a m(7)GpppG-capped mRNA and small nuclear RNA (snRNA) (cap0) to produce m(7)GpppRmpNm (cap2). Recognizes a guanosine cap on RNA independently of its N(7) methylation status. Display cap2 methylation on both cap0 and cap1. Displays a preference for cap1 RNAs. The chain is Cap-specific mRNA (nucleoside-2'-O-)-methyltransferase 2 (CMTR2) from Pongo abelii (Sumatran orangutan).